A 152-amino-acid polypeptide reads, in one-letter code: Deoxyuridine 5'-triphosphate nucleotidohydrolase (152 aa).

Residues 71-73 (RSG), Asn84, 88-90 (LID), and Met98 each bind substrate.

The protein belongs to the dUTPase family. It depends on Mg(2+) as a cofactor.

The catalysed reaction is dUTP + H2O = dUMP + diphosphate + H(+). Its pathway is pyrimidine metabolism; dUMP biosynthesis; dUMP from dCTP (dUTP route): step 2/2. This enzyme is involved in nucleotide metabolism: it produces dUMP, the immediate precursor of thymidine nucleotides and it decreases the intracellular concentration of dUTP so that uracil cannot be incorporated into DNA. The polypeptide is Deoxyuridine 5'-triphosphate nucleotidohydrolase (Citrobacter koseri (strain ATCC BAA-895 / CDC 4225-83 / SGSC4696)).